A 132-amino-acid chain; its full sequence is Small ribosomal subunit protein uS8 (132 aa).

The protein belongs to the universal ribosomal protein uS8 family. Part of the 30S ribosomal subunit. Contacts proteins S5 and S12.

In terms of biological role, one of the primary rRNA binding proteins, it binds directly to 16S rRNA central domain where it helps coordinate assembly of the platform of the 30S subunit. The protein is Small ribosomal subunit protein uS8 of Streptococcus suis (strain 98HAH33).